We begin with the raw amino-acid sequence, 281 residues long: MIEMYDRNYIYNMTTKIMNRSVQAHPFHLVEASPWPIAVSFSLLVVTLSGVMTFQGYSNGLFLLTLGFISLVSTMTLWFKDISREGTFQGHHTFAVQKGLSLGFVLFVVSEVFFFISIFWAFFHSALAPTVELGAHWPPAGIETLNPWEVPLLNTVILLSSGATVTYAHHANPSNRAGVIYGLIATIVLATVFTGFQGFEYYNAPFTFSDGVYGSTFYMATGFHGIHVLVGTIFLTVGLFRVLSYHLTDHHHLGFEQAILYWHFVDVVWLFLFISVYWWGG.

7 helical membrane-spanning segments follow: residues 34 to 54 (PWPIAVSFSLLVVTLSGVMTF), 59 to 79 (NGLFLLTLGFISLVSTMTLWF), 103 to 123 (GFVLFVVSEVFFFISIFWAFF), 148 to 168 (WEVPLLNTVILLSSGATVTYA), 179 to 199 (VIYGLIATIVLATVFTGFQGF), 220 to 240 (ATGFHGIHVLVGTIFLTVGLF), and 259 to 279 (ILYWHFVDVVWLFLFISVYWW).

Belongs to the cytochrome c oxidase subunit 3 family. As to quaternary structure, component of the cytochrome c oxidase (complex IV, CIV), a multisubunit enzyme composed of a catalytic core of 3 subunits and several supernumerary subunits. The complex exists as a monomer or a dimer and forms supercomplexes (SCs) in the inner mitochondrial membrane with ubiquinol-cytochrome c oxidoreductase (cytochrome b-c1 complex, complex III, CIII).

It is found in the mitochondrion inner membrane. It catalyses the reaction 4 Fe(II)-[cytochrome c] + O2 + 8 H(+)(in) = 4 Fe(III)-[cytochrome c] + 2 H2O + 4 H(+)(out). Functionally, component of the cytochrome c oxidase, the last enzyme in the mitochondrial electron transport chain which drives oxidative phosphorylation. The respiratory chain contains 3 multisubunit complexes succinate dehydrogenase (complex II, CII), ubiquinol-cytochrome c oxidoreductase (cytochrome b-c1 complex, complex III, CIII) and cytochrome c oxidase (complex IV, CIV), that cooperate to transfer electrons derived from NADH and succinate to molecular oxygen, creating an electrochemical gradient over the inner membrane that drives transmembrane transport and the ATP synthase. Cytochrome c oxidase is the component of the respiratory chain that catalyzes the reduction of oxygen to water. Electrons originating from reduced cytochrome c in the intermembrane space (IMS) are transferred via the dinuclear copper A center (CU(A)) of subunit 2 and heme A of subunit 1 to the active site in subunit 1, a binuclear center (BNC) formed by heme A3 and copper B (CU(B)). The BNC reduces molecular oxygen to 2 water molecules using 4 electrons from cytochrome c in the IMS and 4 protons from the mitochondrial matrix. The chain is Cytochrome c oxidase subunit 3 (COX3) from Rhizopus stolonifer (Rhizopus nigricans).